A 462-amino-acid chain; its full sequence is MESREDSFISKEKKSTMKKEKQAIASQRNRRRVIKNRGNGKRLIASLSQRKRRRIPRGRGNEKAVFAPSSLPNDVVEEIFLRLPVKAIIQLKSLSKQWRSTIESRSFEERHLKIVERSRVDFPQVMVMSEEYSLKGSKGNQPRPDTDIGFSTICLESASILSSTLITFPQGFQHRIYASESCDGLFCIHSLKTQAIYVVNPATRWFRQLPPARFQILMQKLYPTQDTWIDIKPVVCYTAFVKANDYKLVWLYNSDASNPNLGVTKCEVFDFRANAWRYLTCTPSYRIFPDQVPAATNGSIYWFTEPYNGEIKVVALDIHTETFRVLPKINPAIASSDPDHIDMCTLDNGLCMSKRESDTLVQEIWRLKSSEDSWEKVYTIDLLSCSSSSLSEFRDGFNWTRKDLVEPSTPVAICKDKKILLSHRYARNMIKYDPQIKSISLIYQPPLCRRYASYFQSLISHI.

Basic and acidic residues predominate over residues 1–22; it reads MESREDSFISKEKKSTMKKEKQ. The tract at residues 1-59 is disordered; that stretch reads MESREDSFISKEKKSTMKKEKQAIASQRNRRRVIKNRGNGKRLIASLSQRKRRRIPRGR. Over residues 28 to 40 the composition is skewed to basic residues; the sequence is RNRRRVIKNRGNG. The 46-residue stretch at 65 to 110 folds into the F-box domain; that stretch reads VFAPSSLPNDVVEEIFLRLPVKAIIQLKSLSKQWRSTIESRSFEER.

This is Putative F-box protein At1g12855 from Arabidopsis thaliana (Mouse-ear cress).